The following is a 298-amino-acid chain: MLTHLERLEAESIHIMREVVAESENPVMLYSIGKDSSVMLHLAMKAFYPAKPPFPLLHVDTTWKFREMIAFRDETAARLGLDLRVHINPDGVANGIDPFTHGSAVHTDVWKTQGLKQALDHYGFDAAFGGARRDEEKSRAKERIVSLRSEQHRWDPKRQRPELWSLYNARKRKGESLRVFPISNWTELDIWQYIQLHDIPIVPLYFAKERPVVERDGALIMVDDERLPLREGEVPQMRKVRFRTLGCYPLTGAIDSDATSLDDILQEMRETRTSERQGRLIDSDSAGSMEKKKQEGYF.

2 stretches are compositionally biased toward basic and acidic residues: residues 272 to 282 (RTSERQGRLID) and 289 to 298 (MEKKKQEGYF). The segment at 272 to 298 (RTSERQGRLIDSDSAGSMEKKKQEGYF) is disordered.

This sequence belongs to the PAPS reductase family. CysD subfamily. Heterodimer composed of CysD, the smaller subunit, and CysN.

The catalysed reaction is sulfate + ATP + H(+) = adenosine 5'-phosphosulfate + diphosphate. The protein operates within sulfur metabolism; hydrogen sulfide biosynthesis; sulfite from sulfate: step 1/3. In terms of biological role, with CysN forms the ATP sulfurylase (ATPS) that catalyzes the adenylation of sulfate producing adenosine 5'-phosphosulfate (APS) and diphosphate, the first enzymatic step in sulfur assimilation pathway. APS synthesis involves the formation of a high-energy phosphoric-sulfuric acid anhydride bond driven by GTP hydrolysis by CysN coupled to ATP hydrolysis by CysD. This chain is Sulfate adenylyltransferase subunit 2, found in Burkholderia lata (strain ATCC 17760 / DSM 23089 / LMG 22485 / NCIMB 9086 / R18194 / 383).